The following is a 91-amino-acid chain: Insertion element IS1 1 protein InsA (91 aa).

The protein belongs to the IS1 elements InsA family.

Functionally, absolutely required for transposition of IS1. The polypeptide is Insertion element IS1 1 protein InsA (insA1) (Escherichia coli (strain K12)).